Reading from the N-terminus, the 438-residue chain is (S)-3,5-dihydroxyphenylglycine transaminase (438 aa).

Lys-266 carries the post-translational modification N6-(pyridoxal phosphate)lysine.

It belongs to the class-I pyridoxal-phosphate-dependent aminotransferase family. Pyridoxal 5'-phosphate serves as cofactor.

The catalysed reaction is (S)-3,5-dihydroxyphenylglycine + 2-oxoglutarate = 2-(3,5-dihydroxyphenyl)-2-oxoacetate + L-glutamate. It participates in antibiotic biosynthesis; vancomycin biosynthesis. Catalyzes the transamination of p-hydroxybenzoylformate to L-p-hydroxyphenylglycine as part of the biosynthesis of the (S)-3,5-dihydroxyphenylglycine constituent of the glycopeptide antibiotic chloroeremomycin, a member of the vancomycin group of antibiotics. In Amycolatopsis orientalis (Nocardia orientalis), this protein is (S)-3,5-dihydroxyphenylglycine transaminase (hpgT).